A 108-amino-acid chain; its full sequence is MSTPRPAPPQPGAAEGAGGPEGKAVAGAWEKGPRLGQRLPSIVVEPSEADPVESGELRWPLESAQRGPSQSRAAAAPSPSLPGEPGKAADNAGSECACSEDPAAPARG.

The segment covering 1–11 (MSTPRPAPPQP) has biased composition (pro residues). Residues 1–108 (MSTPRPAPPQ…SEDPAAPARG (108 aa)) are disordered. Residues 37 to 62 (QRLPSIVVEPSEADPVESGELRWPLE) enclose the LBH domain. The segment covering 63 to 85 (SAQRGPSQSRAAAAPSPSLPGEP) has biased composition (low complexity).

The chain is LBH domain-containing protein 2 from Homo sapiens (Human).